A 202-amino-acid chain; its full sequence is uncharacterized protein (202 aa).

It belongs to the dienelactone hydrolase family.

This is an uncharacterized protein from Bacillus subtilis (strain 168).